Here is an 84-residue protein sequence, read N- to C-terminus: Gas vesicle protein M1 (84 aa).

An interacts with GvpL1 region spans residues 1–25 (MEPTKDETHAIVEFVDVLLRDGAVI). The alpha helix 1 stretch occupies residues 5–21 (KDETHAIVEFVDVLLRD). 2 beta-strand regions span residues 27 to 29 (ADV) and 41 to 43 (ISL). Residues 44 to 48 (RAAIA) carry the Conserved in GvpJ1/2 but not GvpA motif. Alpha helix stretches follow at residues 46-56 (AIAGMTTMTEY) and 62-84 (WDAAHRQQSEAFTTSPTADRRED).

This sequence belongs to the gas vesicle GvpA family. GvpF to GvpM interact with each other in vitro, and may form multi-subunit complex(es). Might interact with GvpA1.

It is found in the gas vesicle. Functionally, proteins GvpF to GvpM might be involved in nucleating gas vesicle formation. A minor component of the gas vesicle. Gas vesicles are hollow, gas filled proteinaceous nanostructures found in several microbial planktonic microorganisms. They allow positioning of halobacteria at the optimal depth for growth in the poorly aerated, shallow brine pools of their habitat. In terms of biological role, expression of a 9.5 kb p-vac DNA fragment containing 2 divergently transcribed regions (gvpD-gvpE-gvpF-gvpG-gvpH-gvpI-gvpJ-gvpK-gvpL-gvpM and gvpA-gvpC-gvpN-gvpO) allows H.volcanii to produce gas vesicles. All site-directed mutagenesis is tested in H.volcanii. A minimal gas vesicle can be made in H.volcanii by gvpA1-gvpO1 plus gvpF1-gvpG1-gvpJ1-gvpK1-gvpL1-gvpM1; lack of enough GvpJ1 prevents formation. A similar region restores gas vesicle production in H.halobium without the p-vac locus, but it still has the c-vac locus. This is Gas vesicle protein M1 (gvpM11) from Halobacterium salinarum (strain ATCC 700922 / JCM 11081 / NRC-1) (Halobacterium halobium).